A 487-amino-acid polypeptide reads, in one-letter code: Malonate-semialdehyde dehydrogenase (487 aa).

7 residues coordinate NAD(+): alanine 150, phenylalanine 152, lysine 176, glutamate 179, arginine 180, serine 229, and threonine 251. Catalysis depends on cysteine 284, which acts as the Nucleophile. Glutamate 382 contacts NAD(+).

This sequence belongs to the aldehyde dehydrogenase family. IolA subfamily. In terms of assembly, homotetramer.

It carries out the reaction 3-oxopropanoate + NAD(+) + CoA + H2O = hydrogencarbonate + acetyl-CoA + NADH + H(+). It catalyses the reaction 2-methyl-3-oxopropanoate + NAD(+) + CoA + H2O = propanoyl-CoA + hydrogencarbonate + NADH + H(+). It participates in polyol metabolism; myo-inositol degradation into acetyl-CoA; acetyl-CoA from myo-inositol: step 7/7. Catalyzes the oxidation of malonate semialdehyde (MSA) and methylmalonate semialdehyde (MMSA) into acetyl-CoA and propanoyl-CoA, respectively. Is involved in a myo-inositol catabolic pathway. Bicarbonate, and not CO2, is the end-product of the enzymatic reaction. The chain is Malonate-semialdehyde dehydrogenase from Bacillus subtilis (strain 168).